Consider the following 135-residue polypeptide: Large ribosomal subunit protein uL16c (135 aa).

Residues 1 to 17 (MLSPKRTRFRKQHRGRM) show a composition bias toward basic residues. The segment at 1–21 (MLSPKRTRFRKQHRGRMKGVS) is disordered.

Belongs to the universal ribosomal protein uL16 family. As to quaternary structure, part of the 50S ribosomal subunit.

The protein localises to the plastid. Its subcellular location is the chloroplast. The chain is Large ribosomal subunit protein uL16c from Amborella trichopoda.